The sequence spans 98 residues: NADH-ubiquinone oxidoreductase chain 4L (98 aa).

A run of 3 helical transmembrane segments spans residues 1–21, 29–49, and 61–81; these read MTMVYANIFLAFITSLMGLLM, SLLCLEGMMLSLFVMMTVTIL, and IILLVFAACEAALGLSLLVMV.

It belongs to the complex I subunit 4L family. Core subunit of respiratory chain NADH dehydrogenase (Complex I) which is composed of 45 different subunits.

The protein localises to the mitochondrion inner membrane. It carries out the reaction a ubiquinone + NADH + 5 H(+)(in) = a ubiquinol + NAD(+) + 4 H(+)(out). In terms of biological role, core subunit of the mitochondrial membrane respiratory chain NADH dehydrogenase (Complex I) which catalyzes electron transfer from NADH through the respiratory chain, using ubiquinone as an electron acceptor. Part of the enzyme membrane arm which is embedded in the lipid bilayer and involved in proton translocation. The sequence is that of NADH-ubiquinone oxidoreductase chain 4L (MT-ND4L) from Leptonychotes weddellii (Weddell seal).